The sequence spans 295 residues: Hydroxyquinol 1,2-dioxygenase (295 aa).

The Fe cation site is built by Tyr165, Tyr200, His224, and His226.

Belongs to the intradiol ring-cleavage dioxygenase family. Fe(3+) is required as a cofactor.

The catalysed reaction is benzene-1,2,4-triol + O2 = maleylacetate + 2 H(+). The protein operates within aromatic compound metabolism. Involved in the gamma-resorcylate (2,6-dihydroxybenzoate) catabolism. Catalyzes the conversion of hydroxyquinol to malelylacetate. In Rhizobium sp. (strain MTP-10005), this protein is Hydroxyquinol 1,2-dioxygenase.